Here is a 437-residue protein sequence, read N- to C-terminus: Eukaryotic peptide chain release factor subunit 1 (437 aa).

Ala2 is subject to N-acetylalanine. The NIKS motif; plays an important role in translational termination motif lies at 61–64 (NIKS). Lys63 bears the 4-hydroxylysine mark. Residue Lys87 forms a Glycyl lysine isopeptide (Lys-Gly) (interchain with G-Cter in SUMO2) linkage. Gln185 is subject to N5-methylglutamine. Lys279 participates in a covalent cross-link: Glycyl lysine isopeptide (Lys-Gly) (interchain with G-Cter in ubiquitin). Thr347 carries the post-translational modification Phosphothreonine. Lys404 participates in a covalent cross-link: Glycyl lysine isopeptide (Lys-Gly) (interchain with G-Cter in SUMO2).

This sequence belongs to the eukaryotic release factor 1 family. In terms of assembly, component of the eRF1-eRF3-GTP ternary complex, composed of ETF1/ERF1 and eRF3 (GSPT1/ERF3A or GSPT2/ERF3B) and GTP. Component of the transient SURF (SMG1-UPF1-eRF1-eRF3) complex. Interacts with JMJD4. The ETF1-GSPT1 complex interacts with JMJD4. Post-translationally, hydroxylation at Lys-63 by JMJD4 promotes its translational termination efficiency. Methylated at Gln-185 by N6AMT1. In terms of processing, ubiquitinated at Lys-279 via 'Lys-6'-linked polyubiquitin chains by RNF14 and RNF25 in response to ribosome collisions (ribosome stalling), leading to its degradation by the proteasome and rescue of stalled ribosomes.

The protein localises to the cytoplasm. Component of the eRF1-eRF3-GTP ternary complex, a ternary complex that mediates translation termination in response to the termination codons. The eRF1-eRF3-GTP complex binds to a stop codon in the ribosomal A-site. ETF1/ERF1 is responsible for stop codon recognition and inducing hydrolysis of peptidyl-tRNA. Following GTP hydrolysis, eRF3 (GSPT1/ERF3A or GSPT2/ERF3B) dissociates, permitting ETF1/eRF1 to accommodate fully in the A-site, followed by hydrolysis of peptidyl-tRNA. Component of the transient SURF complex which recruits UPF1 to stalled ribosomes in the context of nonsense-mediated decay (NMD) of mRNAs containing premature stop codons. Required for SHFL-mediated translation termination which inhibits programmed ribosomal frameshifting (-1PRF) of mRNA from viruses and cellular genes. This Bos taurus (Bovine) protein is Eukaryotic peptide chain release factor subunit 1 (ETF1).